The following is a 315-amino-acid chain: NAD kinase (315 aa).

D91 serves as the catalytic Proton acceptor. Residues D91 to G92, R96, N165 to E166, D195, and T206 to S211 contribute to the NAD(+) site.

Belongs to the NAD kinase family. A divalent metal cation serves as cofactor.

The protein resides in the cytoplasm. It carries out the reaction NAD(+) + ATP = ADP + NADP(+) + H(+). Its function is as follows. Involved in the regulation of the intracellular balance of NAD and NADP, and is a key enzyme in the biosynthesis of NADP. Catalyzes specifically the phosphorylation on 2'-hydroxyl of the adenosine moiety of NAD to yield NADP. The sequence is that of NAD kinase from Rhodococcus erythropolis (strain PR4 / NBRC 100887).